Here is a 594-residue protein sequence, read N- to C-terminus: uncharacterized protein (594 aa).

The zn(2)-C6 fungal-type DNA-binding region spans 11 to 38 (CELCRRKKIRCNRELPSCQNCIVYQEEC). A helical transmembrane segment spans residues 503–523 (YLWVFLYCPFTPFLVLFSNIV).

It localises to the nucleus. The protein localises to the membrane. This is an uncharacterized protein from Schizosaccharomyces pombe (strain 972 / ATCC 24843) (Fission yeast).